A 307-amino-acid polypeptide reads, in one-letter code: Small ribosomal subunit protein bS1 (307 aa).

S1 motif domains lie at 32-101 (GDTV…LSIR), 119-183 (DATV…LSHR), and 197-265 (GEVV…LSTK).

Belongs to the bacterial ribosomal protein bS1 family.

Functionally, binds mRNA. The polypeptide is Small ribosomal subunit protein bS1 (rpsA) (Synechococcus sp. (strain ATCC 27144 / PCC 6301 / SAUG 1402/1) (Anacystis nidulans)).